A 319-amino-acid chain; its full sequence is Lipopolysaccharide heptosyltransferase 1 (319 aa).

The ADP-L-glycero-beta-D-manno-heptose site is built by threonine 187, threonine 188, lysine 192, glutamate 222, methionine 242, aspartate 261, threonine 262, glycine 263, and histidine 266.

It belongs to the glycosyltransferase 9 family.

It is found in the cell inner membrane. The enzyme catalyses an alpha-Kdo-(2-&gt;4)-alpha-Kdo-(2-&gt;6)-lipid A + ADP-L-glycero-beta-D-manno-heptose = an L-alpha-D-Hep-(1-&gt;5)-[alpha-Kdo-(2-&gt;4)]-alpha-Kdo-(2-&gt;6)-lipid A + ADP + H(+). It carries out the reaction alpha-Kdo-(2-&gt;4)-alpha-Kdo-(2-&gt;6)-lipid A (E. coli) + ADP-L-glycero-beta-D-manno-heptose = L-alpha-D-Hep-(1-&gt;5)-[alpha-Kdo-(2-&gt;4)]-alpha-Kdo-(2-&gt;6)-lipid A (E. coli) + ADP + H(+). Its pathway is bacterial outer membrane biogenesis; LPS core biosynthesis. Its function is as follows. Glycosyltransferase involved in the biosynthesis of the core oligosaccharide region of lipopolysaccharide (LPS). Catalyzes the addition of the first heptose unit to one 3-deoxy-D-manno-octulosonic acid (Kdo) residue of the Kdo2-lipid A module. The analog ADP-mannose can serve as an alternative donor in place of ADP-L-glycero-D-manno-heptose for the glycosylation of Kdo2-lipid A. Displays no activity with ADP-glucose, GDP-mannose, UDP-glucose or UDP-galactose. This chain is Lipopolysaccharide heptosyltransferase 1, found in Escherichia coli (strain K12).